Here is a 572-residue protein sequence, read N- to C-terminus: Proline--tRNA ligase (572 aa).

This sequence belongs to the class-II aminoacyl-tRNA synthetase family. ProS type 1 subfamily. Homodimer.

The protein resides in the cytoplasm. The enzyme catalyses tRNA(Pro) + L-proline + ATP = L-prolyl-tRNA(Pro) + AMP + diphosphate. Catalyzes the attachment of proline to tRNA(Pro) in a two-step reaction: proline is first activated by ATP to form Pro-AMP and then transferred to the acceptor end of tRNA(Pro). As ProRS can inadvertently accommodate and process non-cognate amino acids such as alanine and cysteine, to avoid such errors it has two additional distinct editing activities against alanine. One activity is designated as 'pretransfer' editing and involves the tRNA(Pro)-independent hydrolysis of activated Ala-AMP. The other activity is designated 'posttransfer' editing and involves deacylation of mischarged Ala-tRNA(Pro). The misacylated Cys-tRNA(Pro) is not edited by ProRS. The protein is Proline--tRNA ligase of Cronobacter sakazakii (strain ATCC BAA-894) (Enterobacter sakazakii).